The sequence spans 108 residues: Urease subunit beta (108 aa).

The protein belongs to the urease beta subunit family. Heterotrimer of UreA (gamma), UreB (beta) and UreC (alpha) subunits. Three heterotrimers associate to form the active enzyme.

The protein resides in the cytoplasm. The catalysed reaction is urea + 2 H2O + H(+) = hydrogencarbonate + 2 NH4(+). The protein operates within nitrogen metabolism; urea degradation; CO(2) and NH(3) from urea (urease route): step 1/1. This is Urease subunit beta from Trichormus variabilis (strain ATCC 29413 / PCC 7937) (Anabaena variabilis).